Here is a 131-residue protein sequence, read N- to C-terminus: Small ribosomal subunit protein uS9 (131 aa).

It belongs to the universal ribosomal protein uS9 family.

The sequence is that of Small ribosomal subunit protein uS9 from Mycoplasmopsis synoviae (strain 53) (Mycoplasma synoviae).